Consider the following 380-residue polypeptide: Cell division protein FtsZ (380 aa).

GTP-binding positions include Gly-27 to Asn-31, Gly-119 to Gly-121, Glu-150, and Asn-189.

It belongs to the FtsZ family. As to quaternary structure, homodimer. Polymerizes to form a dynamic ring structure in a strictly GTP-dependent manner. Interacts directly with several other division proteins.

The protein resides in the cytoplasm. In terms of biological role, essential cell division protein that forms a contractile ring structure (Z ring) at the future cell division site. The regulation of the ring assembly controls the timing and the location of cell division. One of the functions of the FtsZ ring is to recruit other cell division proteins to the septum to produce a new cell wall between the dividing cells. Binds GTP and shows GTPase activity. This Mycoplasma pneumoniae (strain ATCC 29342 / M129 / Subtype 1) (Mycoplasmoides pneumoniae) protein is Cell division protein FtsZ.